We begin with the raw amino-acid sequence, 429 residues long: TNF receptor-associated factor family protein DDB_G0267744 (429 aa).

The segment at 22-60 adopts an RING-type; degenerate zinc-finger fold; the sequence is CVICSHLQVDIYQCVEGHFACKNCFLKMIELKKQCMTCR. 2 consecutive TRAF-type zinc fingers follow at residues 151–203 and 204–265; these read HHLK…GEFN and NHQD…SNSE.

It belongs to the TNF receptor-associated factor family.

The protein resides in the cytoplasm. Its function is as follows. Probable adapter protein and signal transducer that links members of the tumor necrosis factor receptor family to different signaling pathways by association with the receptor cytoplasmic domain and kinases. The protein is TNF receptor-associated factor family protein DDB_G0267744 of Dictyostelium discoideum (Social amoeba).